Reading from the N-terminus, the 300-residue chain is Soluble inorganic pyrophosphatase 6, chloroplastic (300 aa).

A chloroplast-targeting transit peptide spans 1 to 66; it reads MAATRVLTAA…CSAIYNPQVK (66 aa). Arg-140 contacts diphosphate. Tyr-142 functions as the Proton donor in the catalytic mechanism. Mg(2+)-binding residues include Asp-173, Asp-178, and Asp-210.

This sequence belongs to the PPase family. Mg(2+) is required as a cofactor. As to expression, expressed in all tissues tested. Highest expression in flowers, leaves and roots. Lower levels of expression in siliques, stems, ovary, stigma and pollen.

It localises to the plastid. The protein localises to the chloroplast stroma. It carries out the reaction diphosphate + H2O = 2 phosphate + H(+). Its activity is regulated as follows. Inhibited by NaF. This Arabidopsis thaliana (Mouse-ear cress) protein is Soluble inorganic pyrophosphatase 6, chloroplastic.